We begin with the raw amino-acid sequence, 305 residues long: UDP-3-O-acyl-N-acetylglucosamine deacetylase (305 aa).

Zn(2+)-binding residues include His-78, His-237, and Asp-241. Catalysis depends on His-264, which acts as the Proton donor.

Belongs to the LpxC family. Zn(2+) is required as a cofactor.

It catalyses the reaction a UDP-3-O-[(3R)-3-hydroxyacyl]-N-acetyl-alpha-D-glucosamine + H2O = a UDP-3-O-[(3R)-3-hydroxyacyl]-alpha-D-glucosamine + acetate. It participates in glycolipid biosynthesis; lipid IV(A) biosynthesis; lipid IV(A) from (3R)-3-hydroxytetradecanoyl-[acyl-carrier-protein] and UDP-N-acetyl-alpha-D-glucosamine: step 2/6. Its function is as follows. Catalyzes the hydrolysis of UDP-3-O-myristoyl-N-acetylglucosamine to form UDP-3-O-myristoylglucosamine and acetate, the committed step in lipid A biosynthesis. In Burkholderia ambifaria (strain ATCC BAA-244 / DSM 16087 / CCUG 44356 / LMG 19182 / AMMD) (Burkholderia cepacia (strain AMMD)), this protein is UDP-3-O-acyl-N-acetylglucosamine deacetylase.